The following is a 451-amino-acid chain: REST corepressor 3 (451 aa).

The segment at Met1 to Val55 is disordered. The 85-residue stretch at Val55–Thr139 folds into the ELM2 domain. Residue Lys76 forms a Glycyl lysine isopeptide (Lys-Gly) (interchain with G-Cter in SUMO2) linkage. An SANT domain is found at Pro140 to Ser191. The interval Ala204–Lys275 is disordered. A phosphoserine mark is found at Ser212 and Ser227. A compositionally biased stretch (basic and acidic residues) spans Glu218–Asn240. Lys249 is covalently cross-linked (Glycyl lysine isopeptide (Lys-Gly) (interchain with G-Cter in SUMO2)). Residues Gln261–Pro273 are compositionally biased toward basic residues. Residues Ala293 to Gly329 adopt a coiled-coil conformation. Positions Phe333–His451 are disordered. A compositionally biased stretch (pro residues) spans Pro349–Thr361. Residues Arg375–Leu384 are compositionally biased toward low complexity. An asymmetric dimethylarginine mark is found at Arg401 and Arg413. Residues Val431–His451 are compositionally biased toward polar residues.

It belongs to the CoREST family.

Its subcellular location is the nucleus. Functionally, may act as a component of a corepressor complex that represses transcription. In Mus musculus (Mouse), this protein is REST corepressor 3 (Rcor3).